A 216-amino-acid chain; its full sequence is Thiopurine S-methyltransferase (216 aa).

Residues Trp10, Leu45, Glu66, and Arg123 each coordinate S-adenosyl-L-methionine.

It belongs to the class I-like SAM-binding methyltransferase superfamily. TPMT family.

It is found in the cytoplasm. It carries out the reaction S-adenosyl-L-methionine + a thiopurine = S-adenosyl-L-homocysteine + a thiopurine S-methylether.. The protein is Thiopurine S-methyltransferase of Pseudomonas entomophila (strain L48).